The primary structure comprises 116 residues: Large ribosomal subunit protein bL17 (116 aa).

The protein belongs to the bacterial ribosomal protein bL17 family. As to quaternary structure, part of the 50S ribosomal subunit. Contacts protein L32.

The sequence is that of Large ribosomal subunit protein bL17 from Aliarcobacter butzleri (strain RM4018) (Arcobacter butzleri).